A 151-amino-acid chain; its full sequence is Nucleoside diphosphate kinase (151 aa).

6 residues coordinate ATP: Lys-10, Phe-58, Arg-86, Thr-92, Arg-103, and Asn-113. Catalysis depends on His-116, which acts as the Pros-phosphohistidine intermediate.

This sequence belongs to the NDK family. Homotetramer. Mg(2+) serves as cofactor.

Its subcellular location is the cytoplasm. It carries out the reaction dZDP + ATP = dZTP + ADP. It catalyses the reaction a 2'-deoxyribonucleoside 5'-diphosphate + ATP = a 2'-deoxyribonucleoside 5'-triphosphate + ADP. The catalysed reaction is a ribonucleoside 5'-diphosphate + ATP = a ribonucleoside 5'-triphosphate + ADP. It participates in purine metabolism. In terms of biological role, major role in the synthesis of nucleoside triphosphates other than ATP. The ATP gamma phosphate is transferred to the NDP beta phosphate via a ping-pong mechanism, using a phosphorylated active-site intermediate. Its function is as follows. (Microbial infection) Catalyzes the phosphorylation of dZDP to dZTP, when the bacterium is infected by a phage that produces the substrate for the synthesis of dZTP (2- amino-2'-deoxyadenosine 5'-triphosphate), which is then used by the phage as a DNA polymerase substrate. The protein is Nucleoside diphosphate kinase of Synechococcus sp. (strain CC9902).